We begin with the raw amino-acid sequence, 146 residues long: Hemoglobin subunit beta (146 aa).

Position 1 is an N-acetylvaline (valine 1). The 145-residue stretch at 2–146 (HLTGEEKSAV…VANALAHKYH (145 aa)) folds into the Globin domain. Threonine 12 is modified (phosphothreonine). Serine 44 carries the phosphoserine modification. Lysine 59 is subject to N6-acetyllysine. Residue histidine 63 coordinates heme b. Lysine 82 is subject to N6-acetyllysine. Histidine 92 is a heme b binding site. Cysteine 93 is modified (S-nitrosocysteine). Lysine 144 carries the post-translational modification N6-acetyllysine.

It belongs to the globin family. As to quaternary structure, heterotetramer of two alpha chains and two beta chains. Red blood cells.

Functionally, involved in oxygen transport from the lung to the various peripheral tissues. This is Hemoglobin subunit beta (HBB) from Mico argentatus (Silvery marmoset).